Reading from the N-terminus, the 276-residue chain is Putative pyridoxine kinase (276 aa).

N139 is a binding site for ATP. E142 contacts Mg(2+). Residues 176–180, D188, G213, and K238 contribute to the ATP site; that span reads KGGKA.

The protein belongs to the ThiD family.

The enzyme catalyses pyridoxal + ATP = pyridoxal 5'-phosphate + ADP + H(+). Its function is as follows. Phosphorylates B6 vitamers; functions in a salvage pathway. Uses pyridoxal, pyridoxine, and pyridoxamine as substrates. The protein is Putative pyridoxine kinase (pdxK) of Staphylococcus aureus (strain COL).